Reading from the N-terminus, the 152-residue chain is Nuclear cap-binding protein subunit 2 (152 aa).

Residues Y8, Y31, 100–104, 111–115, and 121–122 contribute to the mRNA site; these read RTDWD, RQFGR, and QV. The 79-residue stretch at 28 to 106 folds into the RRM domain; the sequence is TTLYVGNMSF…RIIRTDWDAG (79 aa).

This sequence belongs to the RRM NCBP2 family. In terms of assembly, component of the nuclear cap-binding complex (CBC), a heterodimer composed of Cbp80 and Cbp20 that interacts with m7GpppG-capped RNA.

It is found in the nucleus. Component of the cap-binding complex (CBC), which binds co-transcriptionally to the 5' cap of pre-mRNAs and is involved in various processes such as pre-mRNA splicing and RNA-mediated gene silencing (RNAi). The CBC complex is involved in miRNA-mediated RNA interference and is required for primary microRNAs (miRNAs) processing. Also involved in innate immunity via the short interfering RNAs (siRNAs) processing machinery by restricting the viral RNA production. In the CBC complex, Cbp20 recognizes and binds capped RNAs (m7GpppG-capped RNA) but requires Cbp80 to stabilize the movement of its N-terminal loop and lock the CBC into a high affinity cap-binding state with the cap structure. The sequence is that of Nuclear cap-binding protein subunit 2 (Cbp20) from Ixodes scapularis (Black-legged tick).